Consider the following 241-residue polypeptide: Phosphoadenosine 5'-phosphosulfate reductase (241 aa).

Cysteine 235 acts as the Nucleophile; cysteine thiosulfonate intermediate in catalysis.

This sequence belongs to the PAPS reductase family. CysH subfamily.

Its subcellular location is the cytoplasm. The enzyme catalyses [thioredoxin]-disulfide + sulfite + adenosine 3',5'-bisphosphate + 2 H(+) = [thioredoxin]-dithiol + 3'-phosphoadenylyl sulfate. The protein operates within sulfur metabolism; hydrogen sulfide biosynthesis; sulfite from sulfate: step 3/3. In terms of biological role, catalyzes the formation of sulfite from phosphoadenosine 5'-phosphosulfate (PAPS) using thioredoxin as an electron donor. The polypeptide is Phosphoadenosine 5'-phosphosulfate reductase (Xanthomonas campestris pv. campestris (strain 8004)).